The chain runs to 62 residues: Large ribosomal subunit protein uL30 (62 aa).

The protein belongs to the universal ribosomal protein uL30 family. In terms of assembly, part of the 50S ribosomal subunit.

The polypeptide is Large ribosomal subunit protein uL30 (Heliobacterium modesticaldum (strain ATCC 51547 / Ice1)).